The primary structure comprises 102 residues: Protein AC4 (102 aa).

It belongs to the geminiviridae protein AC4/C4 family.

Pathogenicity determinant. May act as a suppressor of RNA-mediated gene silencing, also known as post-transcriptional gene silencing (PTGS), a mechanism of plant viral defense that limits the accumulation of viral RNAs. The chain is Protein AC4 from Indian cassava mosaic virus (ICMV).